A 198-amino-acid polypeptide reads, in one-letter code: Putative transposase InsO for insertion sequence element IS911B (198 aa).

Positions 105–198 constitute an Integrase catalytic domain; sequence AVTEPNQVWC…YCGDTGSGRV (94 aa).

Its function is as follows. Involved in the transposition of the insertion sequence IS911B. The protein is Putative transposase InsO for insertion sequence element IS911B (insO2) of Escherichia coli (strain K12).